We begin with the raw amino-acid sequence, 270 residues long: Gap junction beta-3 protein (270 aa).

At 1-20 (MDWKTLQALLSGVNKYSTAF) the chain is on the cytoplasmic side. A helical transmembrane segment spans residues 21–40 (GRIWLSVVFVFRVLVYVVAA). The Extracellular segment spans residues 41 to 75 (ERVWGDEQKDFDCNTKQPGCTNVCYDNYFPISNIR). A helical transmembrane segment spans residues 76-98 (LWALQLIFVTCPSLLVILHVAYR). The Cytoplasmic segment spans residues 99 to 126 (EERERRHRQKHGDQCAKLYDNAGKKHGG). Residues 127-149 (LWWTYLFSLIFKLIIEFLFLYLL) form a helical membrane-spanning segment. Topologically, residues 150-187 (HTLWHGFNMPRLVQCANVAPCPNIVDCYIARPTEKKIF) are extracellular. The chain crosses the membrane as a helical span at residues 188-210 (TYFMVGASAVCIVLTICELCYLI). At 211-270 (CHRVLRGLHKDKPRGGCSPSSSASRASTCRCHHKLVEAGEVDPDPGNNKLQASAPNLTPI) the chain is on the cytoplasmic side. The tract at residues 250–270 (EVDPDPGNNKLQASAPNLTPI) is disordered. Residues 258-270 (NKLQASAPNLTPI) show a composition bias toward polar residues.

This sequence belongs to the connexin family. Beta-type (group I) subfamily. In terms of assembly, a connexon is composed of a hexamer of connexins. Interacts with CNST.

The protein resides in the cell membrane. It is found in the cell junction. Its subcellular location is the gap junction. In terms of biological role, one gap junction consists of a cluster of closely packed pairs of transmembrane channels, the connexons, through which materials of low MW diffuse from one cell to a neighboring cell. This chain is Gap junction beta-3 protein (GJB3), found in Homo sapiens (Human).